A 68-amino-acid polypeptide reads, in one-letter code: MRCVPVFIILLVLIASAPSVDARPQTKDDALASFRDSIKRHLQTLLDARECCPQSPPCCHYYYYGSWK.

The signal sequence occupies residues 1–22 (MRCVPVFIILLVLIASAPSVDA). Positions 23–49 (RPQTKDDALASFRDSIKRHLQTLLDAR) are excised as a propeptide.

The protein belongs to the conotoxin T superfamily. In terms of processing, contains 2 disulfide bonds that can be either 'C1-C3, C2-C4' or 'C1-C4, C2-C3', since these disulfide connectivities have been observed for conotoxins with cysteine framework V (for examples, see AC P0DQQ7 and AC P81755). As to expression, expressed by the venom duct.

The protein localises to the secreted. This Conus pulicarius (Flea-bitten cone) protein is Conotoxin Pu5.5.